The following is a 320-amino-acid chain: Nuclease (320 aa).

Residue His-155 is the Proton acceptor of the active site. Asn-187 is a binding site for Mg(2+). The N-linked (GlcNAc...) asparagine glycan is linked to Asn-204. A disulfide bridge links Cys-312 with Cys-317.

This sequence belongs to the DNA/RNA non-specific endonuclease family. As to quaternary structure, homodimer; as a result of non-covalent interactions and not through the disulfide linkages between the two monomers. It depends on Mg(2+) as a cofactor. Requires Mn(2+) as cofactor. Post-translationally, glycosylated.

It is found in the secreted. This enzyme has both RNase and DNase activity. This chain is Nuclease, found in Syncephalastrum racemosum (Filamentous fungus).